The chain runs to 434 residues: Ribosomal protein uS12 methylthiotransferase RimO (434 aa).

One can recognise an MTTase N-terminal domain in the interval 1-107; that stretch reads MHLGCEKNLV…ILNVLQRIEQ (107 aa). 6 residues coordinate [4Fe-4S] cluster: C5, C41, C70, C145, C149, and C152. Positions 131-360 constitute a Radical SAM core domain; that stretch reads TTGKAVAYLK…ISIQQPIAEL (230 aa). Residues 363-434 form the TRAM domain; sequence QNWIGRTVDV…DLYDLTGQVV (72 aa).

The protein belongs to the methylthiotransferase family. RimO subfamily. Requires [4Fe-4S] cluster as cofactor.

It is found in the cytoplasm. It carries out the reaction L-aspartate(89)-[ribosomal protein uS12]-hydrogen + (sulfur carrier)-SH + AH2 + 2 S-adenosyl-L-methionine = 3-methylsulfanyl-L-aspartate(89)-[ribosomal protein uS12]-hydrogen + (sulfur carrier)-H + 5'-deoxyadenosine + L-methionine + A + S-adenosyl-L-homocysteine + 2 H(+). Functionally, catalyzes the methylthiolation of an aspartic acid residue of ribosomal protein uS12. The chain is Ribosomal protein uS12 methylthiotransferase RimO from Prochlorococcus marinus (strain SARG / CCMP1375 / SS120).